The following is a 176-amino-acid chain: Large ribosomal subunit protein uL6 (176 aa).

Residues 151 to 170 (RPPEPYKGKGVRYADEQVRR) show a composition bias toward basic and acidic residues. A disordered region spans residues 151–176 (RPPEPYKGKGVRYADEQVRRKEAKKK).

It belongs to the universal ribosomal protein uL6 family. Part of the 50S ribosomal subunit.

In terms of biological role, this protein binds to the 23S rRNA, and is important in its secondary structure. It is located near the subunit interface in the base of the L7/L12 stalk, and near the tRNA binding site of the peptidyltransferase center. The polypeptide is Large ribosomal subunit protein uL6 (Shewanella halifaxensis (strain HAW-EB4)).